A 513-amino-acid polypeptide reads, in one-letter code: Noroxomaritidine synthase (513 aa).

Residues 14 to 34 form a helical membrane-spanning segment; it reads HYPEILIAIACFLIFSLLLSA. Cys-458 provides a ligand contact to heme.

Belongs to the cytochrome P450 family. Requires heme as cofactor.

The protein localises to the membrane. The enzyme catalyses 4'-O-methylnorbelladine + reduced [NADPH--hemoprotein reductase] + O2 = (10bS,4aR)-noroxomaritidine + oxidized [NADPH--hemoprotein reductase] + 2 H2O + H(+). The catalysed reaction is 4'-O-methylnorbelladine + reduced [NADPH--hemoprotein reductase] + O2 = (10bR,4aS)-noroxomaritidine + oxidized [NADPH--hemoprotein reductase] + 2 H2O + H(+). It functions in the pathway alkaloid biosynthesis. In terms of biological role, cytochrome P450 that catalyzes an intramolecular para-para' C-C phenol coupling of 4'-O-methylnorbelladine in alkaloids biosynthesis, including haemanthamine- and crinamine-type alkaloids, promising anticancer agents. Catalyzes the formation of (10bR,4aS)-noroxomaritidine and (10bS,4aR)-noroxomaritidine from 4'-O-methylnorbelladine. Also produces N-demethylnarwedine as a minor product. Involved in the biosynthesis of haemanthamine. Can also use 4'-O-methyl-N-methylnorbelladine, (S)- and (R)-coclaurine as substrates, but not 3'-O-methylnorbelladine, 3',4'-O-dimethylnorbelladine, norbelladine, haemanthamine, (10bS,4aR)- or (10bR,4aS)-noroxomaritidine, isovanillin or tyramine. In Narcissus aff. pseudonarcissus MK-2014 (Daffodil), this protein is Noroxomaritidine synthase.